The primary structure comprises 379 residues: Bifunctional enzyme IspD/IspF (379 aa).

A 2-C-methyl-D-erythritol 4-phosphate cytidylyltransferase region spans residues 1–223; sequence MTVAVIIVAA…RERKGLTMDV (223 aa). Residues 224–379 form a 2-C-methyl-D-erythritol 2,4-cyclodiphosphate synthase region; sequence RLGNGYDVHA…SIATVTLIGA (156 aa). A divalent metal cation-binding residues include aspartate 230 and histidine 232. Residues 230 to 232 and 256 to 257 each bind 4-CDP-2-C-methyl-D-erythritol 2-phosphate; these read DVH and HS. Histidine 264 is a binding site for a divalent metal cation. Residues 278-280, 354-357, phenylalanine 361, and arginine 364 each bind 4-CDP-2-C-methyl-D-erythritol 2-phosphate; these read DIG and TTSE.

It in the N-terminal section; belongs to the IspD/TarI cytidylyltransferase family. IspD subfamily. This sequence in the C-terminal section; belongs to the IspF family. Requires a divalent metal cation as cofactor.

The enzyme catalyses 2-C-methyl-D-erythritol 4-phosphate + CTP + H(+) = 4-CDP-2-C-methyl-D-erythritol + diphosphate. It catalyses the reaction 4-CDP-2-C-methyl-D-erythritol 2-phosphate = 2-C-methyl-D-erythritol 2,4-cyclic diphosphate + CMP. Its pathway is isoprenoid biosynthesis; isopentenyl diphosphate biosynthesis via DXP pathway; isopentenyl diphosphate from 1-deoxy-D-xylulose 5-phosphate: step 2/6. It participates in isoprenoid biosynthesis; isopentenyl diphosphate biosynthesis via DXP pathway; isopentenyl diphosphate from 1-deoxy-D-xylulose 5-phosphate: step 4/6. Its function is as follows. Bifunctional enzyme that catalyzes the formation of 4-diphosphocytidyl-2-C-methyl-D-erythritol from CTP and 2-C-methyl-D-erythritol 4-phosphate (MEP) (IspD), and catalyzes the conversion of 4-diphosphocytidyl-2-C-methyl-D-erythritol 2-phosphate (CDP-ME2P) to 2-C-methyl-D-erythritol 2,4-cyclodiphosphate (ME-CPP) with a corresponding release of cytidine 5-monophosphate (CMP) (IspF). The sequence is that of Bifunctional enzyme IspD/IspF from Rhodobacter capsulatus (strain ATCC BAA-309 / NBRC 16581 / SB1003).